Here is a 179-residue protein sequence, read N- to C-terminus: Large ribosomal subunit protein uL5 (179 aa).

It belongs to the universal ribosomal protein uL5 family. Part of the 50S ribosomal subunit; part of the 5S rRNA/L5/L18/L25 subcomplex. Contacts the 5S rRNA and the P site tRNA. Forms a bridge to the 30S subunit in the 70S ribosome.

Functionally, this is one of the proteins that bind and probably mediate the attachment of the 5S RNA into the large ribosomal subunit, where it forms part of the central protuberance. In the 70S ribosome it contacts protein S13 of the 30S subunit (bridge B1b), connecting the 2 subunits; this bridge is implicated in subunit movement. Contacts the P site tRNA; the 5S rRNA and some of its associated proteins might help stabilize positioning of ribosome-bound tRNAs. This chain is Large ribosomal subunit protein uL5, found in Lysinibacillus sphaericus (strain C3-41).